A 547-amino-acid polypeptide reads, in one-letter code: Chaperonin GroEL (547 aa).

Residues 30–33 (TLGP), K51, 87–91 (DGTTT), G415, and D496 each bind ATP.

Belongs to the chaperonin (HSP60) family. Forms a cylinder of 14 subunits composed of two heptameric rings stacked back-to-back. Interacts with the co-chaperonin GroES.

It is found in the cytoplasm. The enzyme catalyses ATP + H2O + a folded polypeptide = ADP + phosphate + an unfolded polypeptide.. In terms of biological role, together with its co-chaperonin GroES, plays an essential role in assisting protein folding. The GroEL-GroES system forms a nano-cage that allows encapsulation of the non-native substrate proteins and provides a physical environment optimized to promote and accelerate protein folding. The sequence is that of Chaperonin GroEL from Chlorobaculum parvum (strain DSM 263 / NCIMB 8327) (Chlorobium vibrioforme subsp. thiosulfatophilum).